The chain runs to 155 residues: Protein SprT-like (155 aa).

One can recognise a SprT-like domain in the interval 7-144 (QRHMEEVSLQ…CGSCGGKLKQ (138 aa)). His-67 serves as a coordination point for Zn(2+). Residue Glu-68 is part of the active site. His-71 is a Zn(2+) binding site.

Belongs to the SprT family. Zn(2+) serves as cofactor.

It is found in the cytoplasm. In Listeria welshimeri serovar 6b (strain ATCC 35897 / DSM 20650 / CCUG 15529 / CIP 8149 / NCTC 11857 / SLCC 5334 / V8), this protein is Protein SprT-like.